The chain runs to 414 residues: Tar DNA-binding protein homolog 1 (414 aa).

2 stretches are compositionally biased toward basic and acidic residues: residues methionine 1 to aspartate 44 and aspartate 153 to glutamate 167. 2 disordered regions span residues methionine 1 to proline 58 and serine 132 to glutamate 167. RRM domains are found at residues valine 173 to proline 259 and serine 262 to proline 341. The interval glutamate 343 to tryptophan 414 is disordered. The segment covering asparagine 361–isoleucine 373 has biased composition (basic and acidic residues).

In terms of assembly, interacts with chromobox protein homolog hpl-2; interaction may maintain localization of hpl-2 to gene bodies. Widely expressed in a range of tissues including body wall muscles, pharynx and neurons of the midbody in adults and larvae.

Its subcellular location is the nucleus. It localises to the cytoplasm. Functionally, RNA-binding protein which regulates transcription, splicing and RNA-editing. Limits the accumulation of double-stranded RNA by maintaining the abundance of the mature RNA transcripts that are formed from double-stranded precursor RNAs. Stress response protein that acts downstream of daf-16 in the insulin/IGF pathway to regulate longevity and the cellular stress response to osmotic, oxidative, proteotoxic and endoplasmic reticulum stress. Involved in the regulation of physiological processes including aging, fertility, growth and locomotion. Plays a role in maintaining localization of chromobox protein homolog hpl-2 to gene bodies, perhaps acting via binding to nascent RNA transcripts. This Caenorhabditis elegans protein is Tar DNA-binding protein homolog 1.